A 170-amino-acid chain; its full sequence is tRNA-splicing endonuclease (170 aa).

Catalysis depends on residues tyrosine 110, histidine 116, and lysine 147.

It belongs to the tRNA-intron endonuclease family. Archaeal short subfamily. In terms of assembly, homotetramer; although the tetramer contains four active sites, only two participate in the cleavage. Therefore, it should be considered as a dimer of dimers.

The catalysed reaction is pretRNA = a 3'-half-tRNA molecule with a 5'-OH end + a 5'-half-tRNA molecule with a 2',3'-cyclic phosphate end + an intron with a 2',3'-cyclic phosphate and a 5'-hydroxyl terminus.. Functionally, endonuclease that removes tRNA introns. Cleaves pre-tRNA at the 5'- and 3'-splice sites to release the intron. The products are an intron and two tRNA half-molecules bearing 2',3' cyclic phosphate and 5'-OH termini. Recognizes a pseudosymmetric substrate in which 2 bulged loops of 3 bases are separated by a stem of 4 bp. This Pyrococcus furiosus (strain ATCC 43587 / DSM 3638 / JCM 8422 / Vc1) protein is tRNA-splicing endonuclease.